Consider the following 123-residue polypeptide: Protein Wnt-7a (123 aa).

A lipid anchor (O-palmitoleoyl serine; by PORCN) is attached at serine 1. Positions 33–61 are disordered linker; sequence VEPVRASRNKRPTFLKIKKPLSYRKPMDT. A disulfide bond links cysteine 89 and cysteine 104. The N-linked (GlcNAc...) asparagine glycan is linked to asparagine 90.

It belongs to the Wnt family. Forms a soluble 1:1 complex with AFM; this prevents oligomerization and is required for prolonged biological activity. The complex with AFM may represent the physiological form in body fluids. Interacts with FZD5. Interacts with PORCN. Post-translationally, palmitoleoylation is required for efficient binding to frizzled receptors. Depalmitoleoylation leads to Wnt signaling pathway inhibition.

It is found in the secreted. The protein localises to the extracellular space. The protein resides in the extracellular matrix. Its function is as follows. Ligand for members of the frizzled family of seven transmembrane receptors that functions in the canonical Wnt/beta-catenin signaling pathway. Plays an important role in embryonic development, including dorsal versus ventral patterning during limb development, skeleton development and urogenital tract development. Required for central nervous system (CNS) angiogenesis and blood-brain barrier regulation. The chain is Protein Wnt-7a (WNT7A) from Meleagris gallopavo (Wild turkey).